Consider the following 384-residue polypeptide: 8-amino-7-oxononanoate synthase (384 aa).

Residue Arg-21 coordinates substrate. 108–109 (GF) contacts pyridoxal 5'-phosphate. Residue His-133 participates in substrate binding. The pyridoxal 5'-phosphate site is built by Ser-179, His-207, and Thr-233. N6-(pyridoxal phosphate)lysine is present on Lys-236. Thr-352 contacts substrate.

The protein belongs to the class-II pyridoxal-phosphate-dependent aminotransferase family. BioF subfamily. As to quaternary structure, homodimer. The cofactor is pyridoxal 5'-phosphate.

The catalysed reaction is 6-carboxyhexanoyl-[ACP] + L-alanine + H(+) = (8S)-8-amino-7-oxononanoate + holo-[ACP] + CO2. It functions in the pathway cofactor biosynthesis; biotin biosynthesis. In terms of biological role, catalyzes the decarboxylative condensation of pimeloyl-[acyl-carrier protein] and L-alanine to produce 8-amino-7-oxononanoate (AON), [acyl-carrier protein], and carbon dioxide. This Escherichia coli (strain UTI89 / UPEC) protein is 8-amino-7-oxononanoate synthase.